The following is a 272-amino-acid chain: D-aminoacyl-tRNA deacylase (272 aa).

The protein belongs to the DtdA deacylase family. Monomer. The cofactor is Zn(2+).

It carries out the reaction a D-aminoacyl-tRNA + H2O = a tRNA + a D-alpha-amino acid + H(+). The enzyme catalyses glycyl-tRNA(Ala) + H2O = tRNA(Ala) + glycine + H(+). In terms of biological role, D-aminoacyl-tRNA deacylase with broad substrate specificity. By recycling D-aminoacyl-tRNA to D-amino acids and free tRNA molecules, this enzyme counteracts the toxicity associated with the formation of D-aminoacyl-tRNA entities in vivo. The polypeptide is D-aminoacyl-tRNA deacylase (Thermococcus onnurineus (strain NA1)).